A 173-amino-acid chain; its full sequence is RNA pyrophosphohydrolase (173 aa).

A Nudix hydrolase domain is found at 11-164; that stretch reads PYRRCVGVVV…KKHVYRKVVS (154 aa). Positions 52 to 73 match the Nudix box motif; that stretch reads GGIDEGEEPLDAACRELYEETG.

The protein belongs to the Nudix hydrolase family. RppH subfamily. A divalent metal cation serves as cofactor.

Functionally, accelerates the degradation of transcripts by removing pyrophosphate from the 5'-end of triphosphorylated RNA, leading to a more labile monophosphorylated state that can stimulate subsequent ribonuclease cleavage. This Bartonella quintana (strain Toulouse) (Rochalimaea quintana) protein is RNA pyrophosphohydrolase.